A 101-amino-acid polypeptide reads, in one-letter code: Large ribosomal subunit protein bL21 (101 aa).

This sequence belongs to the bacterial ribosomal protein bL21 family. As to quaternary structure, part of the 50S ribosomal subunit. Contacts protein L20.

Functionally, this protein binds to 23S rRNA in the presence of protein L20. In Corynebacterium aurimucosum (strain ATCC 700975 / DSM 44827 / CIP 107346 / CN-1) (Corynebacterium nigricans), this protein is Large ribosomal subunit protein bL21.